Here is a 219-residue protein sequence, read N- to C-terminus: MKKTDWSQPLRNRLAEDYFPKMIEFINQTYQEGKVYPPENQIFRAIELTPLAQTKVIIVGQDPYPQPGKAQGLAFSYPATFKVNRPDSIVNIQKELREEGFSKDDSDLTAWAEQGVLLLNAVLTVPEFASNAHAGKIWEPLTDEIIKIASDDERPKVFILWGGFARKKAKLIDGSKHLILEAAHPSPLSASRGFFGSHPFSKTNEFLVESGQSPIDWSK.

The active-site Proton acceptor is D62.

Belongs to the uracil-DNA glycosylase (UDG) superfamily. UNG family.

The protein localises to the cytoplasm. It catalyses the reaction Hydrolyzes single-stranded DNA or mismatched double-stranded DNA and polynucleotides, releasing free uracil.. In terms of biological role, excises uracil residues from the DNA which can arise as a result of misincorporation of dUMP residues by DNA polymerase or due to deamination of cytosine. The chain is Uracil-DNA glycosylase (ung) from Lactococcus lactis subsp. lactis (strain IL1403) (Streptococcus lactis).